A 240-amino-acid chain; its full sequence is Citrate synthase-lysine N-methyltransferase CSKMT, mitochondrial (240 aa).

The transit peptide at 1 to 21 (MAALRRMLHLPRLTMGTCRPF) directs the protein to the mitochondrion.

Belongs to the methyltransferase superfamily.

It localises to the mitochondrion. It catalyses the reaction L-lysyl-[citrate synthase] + S-adenosyl-L-methionine = N(6)-methyl-L-lysyl-[citrate synthase] + S-adenosyl-L-homocysteine + H(+). The catalysed reaction is N(6)-methyl-L-lysyl-[citrate synthase] + S-adenosyl-L-methionine = N(6),N(6)-dimethyl-L-lysyl-[citrate synthase] + S-adenosyl-L-homocysteine + H(+). The enzyme catalyses N(6),N(6)-dimethyl-L-lysyl-[citrate synthase] + S-adenosyl-L-methionine = N(6),N(6),N(6)-trimethyl-L-lysyl-[citrate synthase] + S-adenosyl-L-homocysteine + H(+). Citrate synthase-lysine methyltransferase activity is inhibited by S-adenosylhomocysteine (AdoHcy) and oxaloacetate (OAA). Its function is as follows. Protein-lysine methyltransferase that selectively trimethylates citrate synthase (CS) in mitochondria. Seems to conduct trimethylation in a highly distributive manner rather than in a processive manner, and thus introduces a single methyl group per binding event. This is Citrate synthase-lysine N-methyltransferase CSKMT, mitochondrial from Pongo abelii (Sumatran orangutan).